A 27-amino-acid polypeptide reads, in one-letter code: Protein YkiD (27 aa).

The chain is Protein YkiD from Escherichia coli (strain K12).